We begin with the raw amino-acid sequence, 293 residues long: Zinc metalloproteinase nas-2 (293 aa).

A signal peptide spans 1 to 17; sequence MIFPLLLTLILPNFVAP. Residues 18–67 constitute a propeptide that is removed on maturation; the sequence is KVLEPEKDDEIAVSTQREKTFFDMKLILTKLPTFEPSKYGHINIPLRKKR. Residues 67-260 form the Peptidase M12A domain; it reads RGIALHPLQW…ININTFYKCK (194 aa). Asn-111 carries an N-linked (GlcNAc...) asparagine glycan. Cystine bridges form between Cys-114/Cys-259 and Cys-139/Cys-169. His-180 serves as a coordination point for Zn(2+). Glu-181 is a catalytic residue. 2 residues coordinate Zn(2+): His-184 and His-190. The N-linked (GlcNAc...) asparagine glycan is linked to Asn-287.

Zn(2+) serves as cofactor.

The protein resides in the secreted. In terms of biological role, metalloprotease. The sequence is that of Zinc metalloproteinase nas-2 (nas-2) from Caenorhabditis elegans.